The following is a 182-amino-acid chain: NADH-quinone oxidoreductase subunit B (182 aa).

Residues Cys-47, Cys-48, Cys-113, and Cys-142 each contribute to the [4Fe-4S] cluster site.

The protein belongs to the complex I 20 kDa subunit family. As to quaternary structure, NDH-1 is composed of 14 different subunits. Subunits NuoB, C, D, E, F, and G constitute the peripheral sector of the complex. Requires [4Fe-4S] cluster as cofactor.

Its subcellular location is the cell inner membrane. The catalysed reaction is a quinone + NADH + 5 H(+)(in) = a quinol + NAD(+) + 4 H(+)(out). Its function is as follows. NDH-1 shuttles electrons from NADH, via FMN and iron-sulfur (Fe-S) centers, to quinones in the respiratory chain. The immediate electron acceptor for the enzyme in this species is believed to be ubiquinone. Couples the redox reaction to proton translocation (for every two electrons transferred, four hydrogen ions are translocated across the cytoplasmic membrane), and thus conserves the redox energy in a proton gradient. This is NADH-quinone oxidoreductase subunit B from Anaeromyxobacter dehalogenans (strain 2CP-1 / ATCC BAA-258).